A 429-amino-acid polypeptide reads, in one-letter code: UDP-N-acetylglucosamine 1-carboxyvinyltransferase (429 aa).

22-23 (KN) lines the phosphoenolpyruvate pocket. Arg102 contributes to the UDP-N-acetyl-alpha-D-glucosamine binding site. The active-site Proton donor is Cys126. Cys126 bears the 2-(S-cysteinyl)pyruvic acid O-phosphothioketal mark. UDP-N-acetyl-alpha-D-glucosamine contacts are provided by residues 131 to 135 (RPVDL), Asp316, and Ile338.

The protein belongs to the EPSP synthase family. MurA subfamily.

Its subcellular location is the cytoplasm. It catalyses the reaction phosphoenolpyruvate + UDP-N-acetyl-alpha-D-glucosamine = UDP-N-acetyl-3-O-(1-carboxyvinyl)-alpha-D-glucosamine + phosphate. Its pathway is cell wall biogenesis; peptidoglycan biosynthesis. Cell wall formation. Adds enolpyruvyl to UDP-N-acetylglucosamine. The sequence is that of UDP-N-acetylglucosamine 1-carboxyvinyltransferase from Nitrobacter winogradskyi (strain ATCC 25391 / DSM 10237 / CIP 104748 / NCIMB 11846 / Nb-255).